Consider the following 425-residue polypeptide: Serine--tRNA ligase (425 aa).

An L-serine-binding site is contributed by 231–233 (TAE). ATP-binding positions include 262–264 (RTE) and Val-278. Glu-285 is a binding site for L-serine. Residue 349-352 (EVTS) coordinates ATP. Thr-384 serves as a coordination point for L-serine.

It belongs to the class-II aminoacyl-tRNA synthetase family. Type-1 seryl-tRNA synthetase subfamily. Homodimer. The tRNA molecule binds across the dimer.

The protein resides in the cytoplasm. The enzyme catalyses tRNA(Ser) + L-serine + ATP = L-seryl-tRNA(Ser) + AMP + diphosphate + H(+). It catalyses the reaction tRNA(Sec) + L-serine + ATP = L-seryl-tRNA(Sec) + AMP + diphosphate + H(+). It participates in aminoacyl-tRNA biosynthesis; selenocysteinyl-tRNA(Sec) biosynthesis; L-seryl-tRNA(Sec) from L-serine and tRNA(Sec): step 1/1. Catalyzes the attachment of serine to tRNA(Ser). Is also able to aminoacylate tRNA(Sec) with serine, to form the misacylated tRNA L-seryl-tRNA(Sec), which will be further converted into selenocysteinyl-tRNA(Sec). This Dictyoglomus thermophilum (strain ATCC 35947 / DSM 3960 / H-6-12) protein is Serine--tRNA ligase.